Reading from the N-terminus, the 134-residue chain is D-ribose pyranase (134 aa).

His-20 acts as the Proton donor in catalysis. Substrate-binding positions include Asp-28, His-101, and 123 to 125; that span reads YCN.

The protein belongs to the RbsD / FucU family. RbsD subfamily. Homodecamer.

The protein localises to the cytoplasm. It carries out the reaction beta-D-ribopyranose = beta-D-ribofuranose. Its pathway is carbohydrate metabolism; D-ribose degradation; D-ribose 5-phosphate from beta-D-ribopyranose: step 1/2. Its function is as follows. Catalyzes the interconversion of beta-pyran and beta-furan forms of D-ribose. The sequence is that of D-ribose pyranase from Pseudomonas fluorescens (strain SBW25).